We begin with the raw amino-acid sequence, 193 residues long: Imidazoleglycerol-phosphate dehydratase (193 aa).

The protein belongs to the imidazoleglycerol-phosphate dehydratase family.

Its subcellular location is the cytoplasm. It carries out the reaction D-erythro-1-(imidazol-4-yl)glycerol 3-phosphate = 3-(imidazol-4-yl)-2-oxopropyl phosphate + H2O. Its pathway is amino-acid biosynthesis; L-histidine biosynthesis; L-histidine from 5-phospho-alpha-D-ribose 1-diphosphate: step 6/9. The polypeptide is Imidazoleglycerol-phosphate dehydratase (Saccharolobus islandicus (strain Y.N.15.51 / Yellowstone #2) (Sulfolobus islandicus)).